Consider the following 272-residue polypeptide: Small ribosomal subunit biogenesis GTPase RsgA (272 aa).

Residues 56-207 enclose the CP-type G domain; the sequence is KNILIRPKVA…IIDTPGFSSI (152 aa). GTP contacts are provided by residues 105 to 108 and 151 to 159; these read TKAD and GQSGVGKTT. 4 residues coordinate Zn(2+): Cys230, Cys235, His237, and Cys245.

It belongs to the TRAFAC class YlqF/YawG GTPase family. RsgA subfamily. In terms of assembly, monomer. Associates with 30S ribosomal subunit, binds 16S rRNA. Zn(2+) serves as cofactor.

It is found in the cytoplasm. In terms of biological role, one of several proteins that assist in the late maturation steps of the functional core of the 30S ribosomal subunit. Helps release RbfA from mature subunits. May play a role in the assembly of ribosomal proteins into the subunit. Circularly permuted GTPase that catalyzes slow GTP hydrolysis, GTPase activity is stimulated by the 30S ribosomal subunit. This Mycoplasmopsis pulmonis (strain UAB CTIP) (Mycoplasma pulmonis) protein is Small ribosomal subunit biogenesis GTPase RsgA.